The chain runs to 104 residues: Ribonuclease P protein component 4 (104 aa).

The Zn(2+) site is built by Cys-63, Cys-66, Cys-89, and Cys-92.

Belongs to the eukaryotic/archaeal RNase P protein component 4 family. Consists of a catalytic RNA component and at least 4-5 protein subunits. Zn(2+) serves as cofactor.

It is found in the cytoplasm. The enzyme catalyses Endonucleolytic cleavage of RNA, removing 5'-extranucleotides from tRNA precursor.. In terms of biological role, part of ribonuclease P, a protein complex that generates mature tRNA molecules by cleaving their 5'-ends. The polypeptide is Ribonuclease P protein component 4 (Methanoregula boonei (strain DSM 21154 / JCM 14090 / 6A8)).